The sequence spans 38 residues: Photosystem II reaction center protein L (38 aa).

Residues 17 to 37 (SLFWGLLLIFVLAVLFSNYFF) traverse the membrane as a helical segment.

This sequence belongs to the PsbL family. In terms of assembly, PSII is composed of 1 copy each of membrane proteins PsbA, PsbB, PsbC, PsbD, PsbE, PsbF, PsbH, PsbI, PsbJ, PsbK, PsbL, PsbM, PsbT, PsbX, PsbY, PsbZ, Psb30/Ycf12, at least 3 peripheral proteins of the oxygen-evolving complex and a large number of cofactors. It forms dimeric complexes.

It localises to the plastid. The protein resides in the chloroplast thylakoid membrane. Its function is as follows. One of the components of the core complex of photosystem II (PSII). PSII is a light-driven water:plastoquinone oxidoreductase that uses light energy to abstract electrons from H(2)O, generating O(2) and a proton gradient subsequently used for ATP formation. It consists of a core antenna complex that captures photons, and an electron transfer chain that converts photonic excitation into a charge separation. This subunit is found at the monomer-monomer interface and is required for correct PSII assembly and/or dimerization. The chain is Photosystem II reaction center protein L from Chaetosphaeridium globosum (Charophycean green alga).